The following is a 406-amino-acid chain: GTPase Obg (406 aa).

The Obg domain maps to Met-1–Leu-159. The segment at Asn-127–Glu-148 is disordered. The span at Arg-129 to Pro-143 shows a compositional bias: polar residues. One can recognise an OBG-type G domain in the interval Ala-160–Asp-334. GTP contacts are provided by residues Gly-166–Ser-173, Phe-191–Val-195, Asp-213–Gly-216, Asn-283–Asp-286, and Ser-315–Leu-317. Residues Ser-173 and Thr-193 each contribute to the Mg(2+) site. A disordered region spans residues Gly-378 to Pro-406. A compositionally biased stretch (acidic residues) spans Ala-385–Gly-399.

The protein belongs to the TRAFAC class OBG-HflX-like GTPase superfamily. OBG GTPase family. As to quaternary structure, monomer. Mg(2+) serves as cofactor.

It localises to the cytoplasm. In terms of biological role, an essential GTPase which binds GTP, GDP and possibly (p)ppGpp with moderate affinity, with high nucleotide exchange rates and a fairly low GTP hydrolysis rate. Plays a role in control of the cell cycle, stress response, ribosome biogenesis and in those bacteria that undergo differentiation, in morphogenesis control. The protein is GTPase Obg of Pseudomonas paraeruginosa (strain DSM 24068 / PA7) (Pseudomonas aeruginosa (strain PA7)).